Reading from the N-terminus, the 732-residue chain is Polyribonucleotide nucleotidyltransferase (732 aa).

Mg(2+) contacts are provided by Asp-503 and Asp-509. The KH domain maps to 570–629 (PRLTAIQVPVESIGLIIGKGGETIRSITEETGAEINIEDDGTVTIACSSNEGTKGAVEII). Positions 639–713 (GTVYIGKVRD…GKTRFALSIK (75 aa)) constitute an S1 motif domain.

The protein belongs to the polyribonucleotide nucleotidyltransferase family. Mg(2+) is required as a cofactor.

It is found in the cytoplasm. The enzyme catalyses RNA(n+1) + phosphate = RNA(n) + a ribonucleoside 5'-diphosphate. Its function is as follows. Involved in mRNA degradation. Catalyzes the phosphorolysis of single-stranded polyribonucleotides processively in the 3'- to 5'-direction. In Chlorobium phaeovibrioides (strain DSM 265 / 1930) (Prosthecochloris vibrioformis (strain DSM 265)), this protein is Polyribonucleotide nucleotidyltransferase.